A 120-amino-acid chain; its full sequence is Small ribosomal subunit protein uS13 (120 aa).

The segment at 94–120 (GLPLRGQRTRTNARTRKGPRKAIAGKK) is disordered.

Belongs to the universal ribosomal protein uS13 family. In terms of assembly, part of the 30S ribosomal subunit. Forms a loose heterodimer with protein S19. Forms two bridges to the 50S subunit in the 70S ribosome.

Functionally, located at the top of the head of the 30S subunit, it contacts several helices of the 16S rRNA. In the 70S ribosome it contacts the 23S rRNA (bridge B1a) and protein L5 of the 50S subunit (bridge B1b), connecting the 2 subunits; these bridges are implicated in subunit movement. Contacts the tRNAs in the A and P-sites. This chain is Small ribosomal subunit protein uS13, found in Azoarcus sp. (strain BH72).